We begin with the raw amino-acid sequence, 176 residues long: NAD(P)H-quinone oxidoreductase subunit 6, chloroplastic (176 aa).

Transmembrane regions (helical) follow at residues 10–30, 32–52, 61–81, 92–112, and 152–172; these read FLLV…VLLP, PIYS…FYIL, AQLL…VMFM, LWTV…ISLI, and FFLP…GAIA.

The protein belongs to the complex I subunit 6 family. As to quaternary structure, NDH is composed of at least 16 different subunits, 5 of which are encoded in the nucleus.

The protein localises to the plastid. It localises to the chloroplast thylakoid membrane. It catalyses the reaction a plastoquinone + NADH + (n+1) H(+)(in) = a plastoquinol + NAD(+) + n H(+)(out). The enzyme catalyses a plastoquinone + NADPH + (n+1) H(+)(in) = a plastoquinol + NADP(+) + n H(+)(out). Functionally, NDH shuttles electrons from NAD(P)H:plastoquinone, via FMN and iron-sulfur (Fe-S) centers, to quinones in the photosynthetic chain and possibly in a chloroplast respiratory chain. The immediate electron acceptor for the enzyme in this species is believed to be plastoquinone. Couples the redox reaction to proton translocation, and thus conserves the redox energy in a proton gradient. The sequence is that of NAD(P)H-quinone oxidoreductase subunit 6, chloroplastic (ndhG) from Solanum bulbocastanum (Wild potato).